We begin with the raw amino-acid sequence, 123 residues long: MVLNDDDLYKKHDQLVNLKRQTYEKIFNRCVNTIKLSSDAGELICLFQIPNFLFGTGYPIVNIKYCANYIINKLSEMNENIETTFIDPNILFIDWRKKPNKQPKTTHHFSTNSSEYKSRKSKH.

Positions 100 to 123 (NKQPKTTHHFSTNSSEYKSRKSKH) are disordered.

This is an uncharacterized protein from Acanthamoeba polyphaga mimivirus (APMV).